Reading from the N-terminus, the 102-residue chain is Small ribosomal subunit protein uS10 (102 aa).

The protein belongs to the universal ribosomal protein uS10 family. As to quaternary structure, part of the 30S ribosomal subunit.

Involved in the binding of tRNA to the ribosomes. The polypeptide is Small ribosomal subunit protein uS10 (Cupriavidus metallidurans (strain ATCC 43123 / DSM 2839 / NBRC 102507 / CH34) (Ralstonia metallidurans)).